Consider the following 359-residue polypeptide: ATPase ASNA1 homolog (359 aa).

23-30 (KGGVGKTT) serves as a coordination point for ATP. Asp-63 is a catalytic residue. 2 residues coordinate ATP: Glu-252 and Asn-279. Zn(2+) contacts are provided by Cys-291 and Cys-294.

The protein belongs to the arsA ATPase family. In terms of assembly, homodimer.

It localises to the cytoplasm. It is found in the endoplasmic reticulum. Functionally, ATPase required for the post-translational delivery of tail-anchored (TA) proteins to the endoplasmic reticulum. Recognizes and selectively binds the transmembrane domain of TA proteins in the cytosol. This complex then targets to the endoplasmic reticulum by membrane-bound receptors, where the tail-anchored protein is released for insertion. This process is regulated by ATP binding and hydrolysis. ATP binding drives the homodimer towards the closed dimer state, facilitating recognition of newly synthesized TA membrane proteins. ATP hydrolysis is required for insertion. Subsequently, the homodimer reverts towards the open dimer state, lowering its affinity for the membrane-bound receptor, and returning it to the cytosol to initiate a new round of targeting. The chain is ATPase ASNA1 homolog from Trypanosoma cruzi (strain CL Brener).